Consider the following 113-residue polypeptide: Retrotransposon Gag-like protein 8A (113 aa).

Belongs to the FAM127 family.

The protein is Retrotransposon Gag-like protein 8A of Homo sapiens (Human).